The sequence spans 1080 residues: Carbamoyl phosphate synthase large chain (1080 aa).

The tract at residues 1–403 (MPKRTDLRTI…SLQKAVRGLE (403 aa)) is carboxyphosphate synthetic domain. Arg129, Arg169, Gly175, Gly176, Glu208, Val210, Glu215, Gly241, Val242, His243, Gln285, and Glu299 together coordinate ATP. In terms of domain architecture, ATP-grasp 1 spans 133-328 (RVAMQEIGLE…IAKIAAKLAV (196 aa)). Mg(2+)-binding residues include Gln285, Glu299, and Asn301. Residues Gln285, Glu299, and Asn301 each contribute to the Mn(2+) site. The tract at residues 404-554 (TGKVGLEPTG…YSTYEEECEA (151 aa)) is oligomerization domain. The tract at residues 555 to 942 (APSDRRKIMI…AFARAQEAGD (388 aa)) is carbamoyl phosphate synthetic domain. Residues 679–876 (QKLVQQLGLR…LAKIAARCMT (198 aa)) form the ATP-grasp 2 domain. Residues Arg715, Arg754, Leu756, Glu761, Gly787, Val788, His789, Ser790, Gln830, and Glu847 each coordinate ATP. Gln830, Glu847, and Asn849 together coordinate Mg(2+). Residues Gln830, Glu847, and Asn849 each coordinate Mn(2+). An MGS-like domain is found at 943–1080 (IRAPQPGRAF…LQELHKELQV (138 aa)). Residues 943–1080 (IRAPQPGRAF…LQELHKELQV (138 aa)) form an allosteric domain region.

The protein belongs to the CarB family. Composed of two chains; the small (or glutamine) chain promotes the hydrolysis of glutamine to ammonia, which is used by the large (or ammonia) chain to synthesize carbamoyl phosphate. Tetramer of heterodimers (alpha,beta)4. It depends on Mg(2+) as a cofactor. Mn(2+) is required as a cofactor.

The enzyme catalyses hydrogencarbonate + L-glutamine + 2 ATP + H2O = carbamoyl phosphate + L-glutamate + 2 ADP + phosphate + 2 H(+). It catalyses the reaction hydrogencarbonate + NH4(+) + 2 ATP = carbamoyl phosphate + 2 ADP + phosphate + 2 H(+). Its pathway is amino-acid biosynthesis; L-arginine biosynthesis; carbamoyl phosphate from bicarbonate: step 1/1. It participates in pyrimidine metabolism; UMP biosynthesis via de novo pathway; (S)-dihydroorotate from bicarbonate: step 1/3. Large subunit of the glutamine-dependent carbamoyl phosphate synthetase (CPSase). CPSase catalyzes the formation of carbamoyl phosphate from the ammonia moiety of glutamine, carbonate, and phosphate donated by ATP, constituting the first step of 2 biosynthetic pathways, one leading to arginine and/or urea and the other to pyrimidine nucleotides. The large subunit (synthetase) binds the substrates ammonia (free or transferred from glutamine from the small subunit), hydrogencarbonate and ATP and carries out an ATP-coupled ligase reaction, activating hydrogencarbonate by forming carboxy phosphate which reacts with ammonia to form carbamoyl phosphate. The polypeptide is Carbamoyl phosphate synthase large chain (Xylella fastidiosa (strain 9a5c)).